Reading from the N-terminus, the 628-residue chain is Chaperone protein HtpG (628 aa).

Residues 1–334 form an a; substrate-binding region; that stretch reads MTTTDTASET…SEDLPLNLSR (334 aa). Positions 335-550 are b; it reads EMLQNNPQLA…GFGPDRELEK (216 aa). A c region spans residues 551-628; sequence MLARANKGAA…LVLRGLVAHG (78 aa).

The protein belongs to the heat shock protein 90 family. As to quaternary structure, homodimer.

Its subcellular location is the cytoplasm. Functionally, molecular chaperone. Has ATPase activity. In Rhodopseudomonas palustris (strain BisB5), this protein is Chaperone protein HtpG.